We begin with the raw amino-acid sequence, 469 residues long: Phenolic glucoside malonyltransferase 1 (469 aa).

Methionine 1 carries the N-acetylmethionine modification. Histidine 169 (proton acceptor) is an active-site residue. An HXXXD motif motif is present at residues 169–173; sequence HAVLD. Malonyl-CoA is bound at residue 291–292; sequence ST. Aspartate 413 serves as the catalytic Proton acceptor. The short motif at 413 to 417 is the DFGWG motif element; the sequence is DFGWG.

This sequence belongs to the plant acyltransferase family. Phenolic glucoside malonyltransferase subfamily.

It catalyses the reaction a flavonol 3-O-beta-D-glucoside + malonyl-CoA = a flavonol 3-O-(6-O-malonyl-beta-D-glucoside) + CoA. The catalysed reaction is a flavonol 7-O-beta-D-glucoside + malonyl-CoA = a flavonol 7-O-(6-O-malonyl-beta-D-glucoside) + CoA. Its function is as follows. Malonyltransferase acting on xenobiotic glucosides. Has activity toward 2-Naphthol glucoside (2NAG), 1-Naphthol glucoside (1NAG), kaempferol 7-O-glucoside, kaempferol 3-O-glucoside, hydroxycoumarin glucosides, phenol-glucosides and isoflavone glucoside (daidzin), but not toward 4-coumaroyl glucoside, kaempferol 3,7-O-diglucoside, salicylic acid glucoside and phlorizin. In vivo, seems to be involved in the malonylation of 2-Naphthol glucoside while PMAT2 would be involved in the malonylation of 4-methylumbelliferone glucoside or 4-nitrophenyl glucoside. This chain is Phenolic glucoside malonyltransferase 1 (PMAT1), found in Arabidopsis thaliana (Mouse-ear cress).